Here is an 84-residue protein sequence, read N- to C-terminus: Small ribosomal subunit protein bS16 (84 aa).

It belongs to the bacterial ribosomal protein bS16 family.

The sequence is that of Small ribosomal subunit protein bS16 from Ralstonia pickettii (strain 12J).